A 713-amino-acid chain; its full sequence is MNSLFATTAQGLEELLRSELETLGAASCKVALGGVHFQADSRLLYRALLWSRLASRIVLPLNVFSVGSDGDLYRGVQAVDWPSLFTVDKRFAVYFSGTNAAIRNSQYGALKVKDAIVDSFTRHGARRPDVDRQQPDIRIQAYLHRDQVMLSLDLSGSSLHQRGYRGAAGQAPLKENLAVAIVLRSGWKPGTPLLDPMCGSGTLLIEAAMIAADCAPGLTRPYWGFSAWSGHDEAQWQESLDEARARTQTGLAQTSSRFYGFDIDGRVLEKARHNARRAGVAALITFQTGEVAQLINPLPEGQRGTVVSNPPYGERLESEPALIALHNQLGRVMKSQFGGWRLSLFSASPALLGALMLRAERSFSAKNGPLDCEQKNYLLAETATAPGSVEGQIATDFANRLRKNVRSLQKWVEREKLDCYRLYDADLPEYNVAIDRYSSWVVIQEYVAPKSVDPERARQRLYDVINATLAVLAIPASRLVVKARERQKGKSQYEKLAQKGEFLLVEEYGAKLWVNLTDYLDTGLFIDHRIARRMLGEMSRGKDFLNLFAYTGSASVHAGIGGACSTTSVDMSRTYLEWAEKNLRSNGLVGRQHRLIQADCLAWLAMAQETFDVIFIDPPTFSNSKRMADTFDVQRDHLALMAQLKRLLRPGGTLMFSNNKRGFQLDEAGLAALGLRAQSITDRTRSPDFAHNRQIHLCWLISHADKDTFKSCH.

In terms of domain architecture, THUMP spans 43–154 (LLYRALLWSR…RDQVMLSLDL (112 aa)).

This sequence belongs to the methyltransferase superfamily. RlmKL family.

The protein localises to the cytoplasm. The catalysed reaction is guanosine(2445) in 23S rRNA + S-adenosyl-L-methionine = N(2)-methylguanosine(2445) in 23S rRNA + S-adenosyl-L-homocysteine + H(+). The enzyme catalyses guanosine(2069) in 23S rRNA + S-adenosyl-L-methionine = N(2)-methylguanosine(2069) in 23S rRNA + S-adenosyl-L-homocysteine + H(+). Functionally, specifically methylates the guanine in position 2445 (m2G2445) and the guanine in position 2069 (m7G2069) of 23S rRNA. The polypeptide is Ribosomal RNA large subunit methyltransferase K/L (Sodalis glossinidius (strain morsitans)).